Here is a 238-residue protein sequence, read N- to C-terminus: Transcription termination/antitermination protein NusG (238 aa).

This sequence belongs to the NusG family.

In terms of biological role, participates in transcription elongation, termination and antitermination. This is Transcription termination/antitermination protein NusG from Mycobacterium tuberculosis (strain CDC 1551 / Oshkosh).